Here is a 983-residue protein sequence, read N- to C-terminus: MVSYASIPQSSDEAHSTVGASLQLDERKQDLNNFIQRHIGPSSADIQQMLDVLGFSSLDDLIEKTVPSAIRLHEQLQLPEAQTEYAALAKLKQIASKNQVFRSYIGMGYYDTITPSVIGRNILENPGWYTAYTPYQPEIAQGRLEALLNFQTMIIDLTGLEIANASLLDEATAAAEAMSMSYGVSKNKANAYFVSHDCHPQIIDVLQTRAKPLGIEIIIGDHQTFDFDKPIFGAVLQYPASDGTIYDYRAFIETSHAQGALVTVAADPLSLTLLTPPGEFGADIAVGSTQRFGIPLGFGGPHAAYFATKEEYKRQVPGRIVGVSKDVHGKTALRLALQTREQHIRREKATSNICTAQVLLAVMASMYAVYHGPEGLKQIAERIHHLTLVLGVWLQRLGYTITSQSFFDTLQIKLGEKPLQEILEAAEAYRINLRIVDTSTVGISLDETTTLEDVKDICRIFAGTDELPFVLNVQEFDWIIQQSSLKDEPFSRQSSYLTHPVFNRYHSETELLRYLHRLETKDLSLTTSMIPLGSCTMKLNATSEMIPVTWEEFGRIHPFAPLTQTRGYQILFQQLEAWLGEITGFAGVSLQPNAGSQGEYTGLLVIRQYHQSRGETHRNVCLIPNSAHGTNPASAVMCGMKVVAVACDAGGNIDIDDLKAKAEKHSHELAALMVTYPSTHGVFEAGIQEICAVIHSHGGQVYMDGANMNAQVGICRPGDIGADVCHLNLHKTFCIPHGGGGPGMGPIGVASHLVPFLPGHPVLESGKNPQNIGAVAAAPWGSASILVISWMYIVMMGADGLTQATKVAILNANYIAKKLAAYYPVLYKGQNGLVAHECILDLRALKKSANIEIDDIAKRLIDYGFHAPTVSWPVAGTIMVEPTESESQAELDRFCEALIAIRQEIADIEAGKVDIQDNSLKNAPHTVESLIVGEWPHPYSREQAAYPAPWTREHKFWPSVGRIDAAFGDRNFVCSCLPMDAYN.

An N6-(pyridoxal phosphate)lysine modification is found at K731.

It belongs to the GcvP family. As to quaternary structure, the glycine cleavage system is composed of four proteins: P, T, L and H. The cofactor is pyridoxal 5'-phosphate.

The enzyme catalyses N(6)-[(R)-lipoyl]-L-lysyl-[glycine-cleavage complex H protein] + glycine + H(+) = N(6)-[(R)-S(8)-aminomethyldihydrolipoyl]-L-lysyl-[glycine-cleavage complex H protein] + CO2. Functionally, the glycine cleavage system catalyzes the degradation of glycine. The P protein binds the alpha-amino group of glycine through its pyridoxal phosphate cofactor; CO(2) is released and the remaining methylamine moiety is then transferred to the lipoamide cofactor of the H protein. The chain is Glycine dehydrogenase (decarboxylating) from Nostoc sp. (strain PCC 7120 / SAG 25.82 / UTEX 2576).